Here is a 537-residue protein sequence, read N- to C-terminus: MSNQPDHIIIFDTTLRDGEQSPGASLTVEEKLTIARALARLGVDIIEAGFPYASPGDFEAVQKIAKTVGNESGPRICGLARATKNDIKAAGEALKPAFKSRIHTFIATSDIHLKHKLKKTRQEVLAIVPEMVAYAKTFTDDVEFSPEDAGRSDPEFMYQVLETAIAAGATTVNIPDTVGYTTPSEFGALIKGIKDNVPNIDQAIISVHGHDDLGLAVANFLEALKNGARQLECTINGIGERAGNAALEELVMALHVRRQYFNPFLGRPVDSMEPLTNINTKEIYKTSRLVSNLTGMIVQPNKAIVGANAFAHESGIHQDGVLKNKLTYEIMDAESIGLTNNQIVLGKLSGRNAFRTRLDELGFELSERDLNNAFLRFKEVADKKKEITDWDLEAIVNDEIQQAPELFRLELVQVSCGDHSAPTATVTLRTPEGKELTDAAIGTGPVDAVYKAINRVVNVPNELIEFSVKSVTAGIDAMGEVTIRLRHEGRIYSGYAANTDIITASARAYISALNRLYGAIQEQTKVHPSEPVLTSKN.

The Pyruvate carboxyltransferase domain occupies I8–E273. 4 residues coordinate Mn(2+): D17, H208, H210, and N244. Residues R408–N537 are regulatory domain.

The protein belongs to the alpha-IPM synthase/homocitrate synthase family. LeuA type 1 subfamily. Homodimer. Requires Mn(2+) as cofactor.

Its subcellular location is the cytoplasm. The enzyme catalyses 3-methyl-2-oxobutanoate + acetyl-CoA + H2O = (2S)-2-isopropylmalate + CoA + H(+). It functions in the pathway amino-acid biosynthesis; L-leucine biosynthesis; L-leucine from 3-methyl-2-oxobutanoate: step 1/4. Its function is as follows. Catalyzes the condensation of the acetyl group of acetyl-CoA with 3-methyl-2-oxobutanoate (2-ketoisovalerate) to form 3-carboxy-3-hydroxy-4-methylpentanoate (2-isopropylmalate). In Crocosphaera subtropica (strain ATCC 51142 / BH68) (Cyanothece sp. (strain ATCC 51142)), this protein is 2-isopropylmalate synthase.